The chain runs to 146 residues: Protein U1 (146 aa).

Belongs to the nanovirus U1 protein family.

The sequence is that of Protein U1 (DNA-U1) from Subterranean clover stunt virus (strain F) (SCSV).